Here is an 864-residue protein sequence, read N- to C-terminus: Protein translocase subunit SecA (864 aa).

ATP contacts are provided by residues glutamine 85, 103-107 (GEGKT), and aspartate 542.

The protein belongs to the SecA family. In terms of assembly, monomer and homodimer. Part of the essential Sec protein translocation apparatus which comprises SecA, SecYEG and auxiliary proteins SecDF. Other proteins may also be involved.

The protein resides in the cell inner membrane. It localises to the cytoplasm. The enzyme catalyses ATP + H2O + cellular proteinSide 1 = ADP + phosphate + cellular proteinSide 2.. In terms of biological role, part of the Sec protein translocase complex. Interacts with the SecYEG preprotein conducting channel. Has a central role in coupling the hydrolysis of ATP to the transfer of proteins into and across the cell membrane, serving as an ATP-driven molecular motor driving the stepwise translocation of polypeptide chains across the membrane. This is Protein translocase subunit SecA from Fervidobacterium nodosum (strain ATCC 35602 / DSM 5306 / Rt17-B1).